A 148-amino-acid polypeptide reads, in one-letter code: Lysozyme C (148 aa).

Residues 1-18 (MKALLLLGLLLLSVTVQG) form the signal peptide. The region spanning 19–148 (KIFERCDLAR…VSQYVRNCGV (130 aa)) is the C-type lysozyme domain. Disulfide bonds link cysteine 24–cysteine 146, cysteine 48–cysteine 134, cysteine 83–cysteine 99, and cysteine 95–cysteine 113. Residues glutamate 53 and aspartate 71 contribute to the active site.

It belongs to the glycosyl hydrolase 22 family. As to quaternary structure, monomer.

It carries out the reaction Hydrolysis of (1-&gt;4)-beta-linkages between N-acetylmuramic acid and N-acetyl-D-glucosamine residues in a peptidoglycan and between N-acetyl-D-glucosamine residues in chitodextrins.. Functionally, lysozymes have primarily a bacteriolytic function; those in tissues and body fluids are associated with the monocyte-macrophage system and enhance the activity of immunoagents. The sequence is that of Lysozyme C (LYZ) from Halichoerus grypus (Gray seal).